The sequence spans 188 residues: Probable RNA-binding protein 18 (188 aa).

Residues 23-104 (HRLWIGNIDP…KKLVVRWAHA (82 aa)) form the RRM domain. The tract at residues 151–188 (EENPDDYSGPSAYTYNKPPDKREKRSQPYHKHFRKHRR) is disordered. Positions 177-188 (QPYHKHFRKHRR) are enriched in basic residues.

The polypeptide is Probable RNA-binding protein 18 (rbm18) (Danio rerio (Zebrafish)).